The following is a 500-amino-acid chain: L-2-amino-4-chloropent-4-enoate dechlorinase/desaturase (500 aa).

Lys311 carries the N6-(pyridoxal phosphate)lysine modification.

This sequence belongs to the trans-sulfuration enzymes family. Requires pyridoxal 5'-phosphate as cofactor.

The catalysed reaction is L-2-amino-4-chloropent-4-enoate = L-propargylglycine + chloride + H(+). It participates in amino-acid metabolism. The protein operates within antibiotic biosynthesis. In terms of biological role, involved in the biosynthesis of terminal alkyne-containing amino acids such as L-propargylglycine (Pra) and L-beta-ethynylserine, that are produced as antibiotics by S.cattleya. Catalyzes gamma-elimination of chloride from 4-chloro-allyl-L-glycine (also named L-2-amino-4-chloropent-4-enoate), followed by an isomerization, to form the terminal-alkyne product L-propargylglycine. The polypeptide is L-2-amino-4-chloropent-4-enoate dechlorinase/desaturase (Streptantibioticus cattleyicolor (strain ATCC 35852 / DSM 46488 / JCM 4925 / NBRC 14057 / NRRL 8057) (Streptomyces cattleya)).